The primary structure comprises 186 residues: ATP synthase subunit delta (186 aa).

The protein belongs to the ATPase delta chain family. In terms of assembly, F-type ATPases have 2 components, F(1) - the catalytic core - and F(0) - the membrane proton channel. F(1) has five subunits: alpha(3), beta(3), gamma(1), delta(1), epsilon(1). F(0) has three main subunits: a(1), b(2) and c(10-14). The alpha and beta chains form an alternating ring which encloses part of the gamma chain. F(1) is attached to F(0) by a central stalk formed by the gamma and epsilon chains, while a peripheral stalk is formed by the delta and b chains.

Its subcellular location is the cellular chromatophore membrane. F(1)F(0) ATP synthase produces ATP from ADP in the presence of a proton or sodium gradient. F-type ATPases consist of two structural domains, F(1) containing the extramembraneous catalytic core and F(0) containing the membrane proton channel, linked together by a central stalk and a peripheral stalk. During catalysis, ATP synthesis in the catalytic domain of F(1) is coupled via a rotary mechanism of the central stalk subunits to proton translocation. Its function is as follows. This protein is part of the stalk that links CF(0) to CF(1). It either transmits conformational changes from CF(0) to CF(1) or is implicated in proton conduction. This is ATP synthase subunit delta from Rhodobacter capsulatus (Rhodopseudomonas capsulata).